Consider the following 309-residue polypeptide: Glutaminase 2 (309 aa).

7 residues coordinate substrate: S65, N117, E162, N169, Y193, Y245, and V263.

Belongs to the glutaminase family. Homotetramer.

It catalyses the reaction L-glutamine + H2O = L-glutamate + NH4(+). This chain is Glutaminase 2, found in Bacillus subtilis (strain 168).